Reading from the N-terminus, the 100-residue chain is Urease subunit gamma (100 aa).

The protein belongs to the urease gamma subunit family. As to quaternary structure, heterotrimer of UreA (gamma), UreB (beta) and UreC (alpha) subunits. Three heterotrimers associate to form the active enzyme.

It is found in the cytoplasm. It catalyses the reaction urea + 2 H2O + H(+) = hydrogencarbonate + 2 NH4(+). It functions in the pathway nitrogen metabolism; urea degradation; CO(2) and NH(3) from urea (urease route): step 1/1. The polypeptide is Urease subunit gamma (Acinetobacter baumannii (strain SDF)).